The chain runs to 190 residues: Apolipoprotein M (190 aa).

A signal peptide (not cleaved) is located at residues 1–22 (MFHQVWAALLSLYGLLFNSMNQ). Intrachain disulfides connect C23/C169, C95/C185, and C130/C159. Tetradecanoate-binding residues include E138 and R145.

Belongs to the calycin superfamily. Lipocalin family. Highly divergent. As to quaternary structure, interacts with LRP2; LRP2 mediates APOM renal uptake and subsequent lysosomal degradation. In terms of tissue distribution, expressed by the liver; secreted in plasma.

It localises to the secreted. In terms of biological role, probably involved in lipid transport. Can bind sphingosine-1-phosphate, myristic acid, palmitic acid and stearic acid, retinol, all-trans-retinoic acid and 9-cis-retinoic acid. This Mus musculus (Mouse) protein is Apolipoprotein M (Apom).